Reading from the N-terminus, the 584-residue chain is MEVIHGQPYCCRELEGADILSDTFYSNELHTPLETATRPTASEDRYQKFRQSLQRCRLPWGAEREYGGMIPISLPEEHRPKCEPPRVMGKGHQHYGFGGEIWPRKLPIEQFYYLSQNKKSDIYGNDSLLPKPPNSTVGEICSPYPIEHPYHTHISRGAMFPTFTSPKDLYTGIKARTQQPFPPTVPTKPYDTTVLKTRGNPYRYELLDFPMDSKKKALVWPGQRVYFDLPKCVEKNKPVFYPKPPKTFAPNTSLNSWDPITSLKEVNIQRNLEKSHWITSYNHDFTGLGPMNPLELDDYHEKEVAELTGQIGFDPEPQEKVHPALKPTRPLEGRIARLIQNQRPLEAILEQRPSSCPDCTPRVLCTFHTFVPSSTEMMALSDNIPADVTHKNQEIEEKIKEEQSLLSTYALPSCYPTKDLANTYDIKPFPKITDTKKTEDLYWRQLSLKPQLIPYCNPDHYIPYEHLNQYNVYQNPVSLSKPGILQSKPDLKTFDFEHFLSKPEQLTLNMEDDEETKPILGWIPRAGVAKPQTDLLELKNAFSKTGAQKRFHKSVLEDYKDLRDKEHLGKKHQFYGHNSYYFYN.

Its subcellular location is the cytoplasm. It is found in the cytoskeleton. The protein localises to the microtubule organizing center. It localises to the centrosome. The protein resides in the flagellum axoneme. Its function is as follows. Microtubule inner protein (MIP) part of the dynein-decorated doublet microtubules (DMTs) in flagellum axoneme. May serve to reinforce and thus stabilize the microtubule structure in the sperm flagella. The polypeptide is Sperm-associated microtubule inner protein 4 (SPMIP4) (Bos taurus (Bovine)).